A 344-amino-acid polypeptide reads, in one-letter code: Dihydroorotase (344 aa).

Zn(2+) contacts are provided by His-13 and His-15. Residues 15–17 (HLR) and Asn-41 each bind substrate. Residues Lys-98, His-135, and His-173 each contribute to the Zn(2+) site. At Lys-98 the chain carries N6-carboxylysine. His-135 provides a ligand contact to substrate. Leu-218 lines the substrate pocket. Asp-247 is a binding site for Zn(2+). Asp-247 is a catalytic residue. 2 residues coordinate substrate: His-251 and Ala-263.

It belongs to the metallo-dependent hydrolases superfamily. DHOase family. Class II DHOase subfamily. In terms of assembly, homodimer. Zn(2+) is required as a cofactor.

It carries out the reaction (S)-dihydroorotate + H2O = N-carbamoyl-L-aspartate + H(+). It participates in pyrimidine metabolism; UMP biosynthesis via de novo pathway; (S)-dihydroorotate from bicarbonate: step 3/3. Functionally, catalyzes the reversible cyclization of carbamoyl aspartate to dihydroorotate. This Neisseria meningitidis serogroup B (strain ATCC BAA-335 / MC58) protein is Dihydroorotase.